Consider the following 475-residue polypeptide: UDP-N-acetylmuramate--L-alanine ligase (475 aa).

119–125 is a binding site for ATP; sequence GTHGKTT.

It belongs to the MurCDEF family.

The protein localises to the cytoplasm. It catalyses the reaction UDP-N-acetyl-alpha-D-muramate + L-alanine + ATP = UDP-N-acetyl-alpha-D-muramoyl-L-alanine + ADP + phosphate + H(+). The protein operates within cell wall biogenesis; peptidoglycan biosynthesis. In terms of biological role, cell wall formation. The chain is UDP-N-acetylmuramate--L-alanine ligase from Wigglesworthia glossinidia brevipalpis.